The following is a 482-amino-acid chain: BEL1-like homeodomain protein 7 (482 aa).

The segment at serine 118–valine 134 is SR/KY domain. The BELL domain stretch occupies residues glutamate 167–isoleucine 238. Positions threonine 285–methionine 347 form a DNA-binding region, homeobox. A disordered region spans residues aspartate 358–arginine 401. Over residues asparagine 363–arginine 401 the composition is skewed to polar residues.

This sequence belongs to the TALE/BELL homeobox family. As to quaternary structure, may form heterodimeric complexes with TALE/KNOX proteins.

It is found in the nucleus. The chain is BEL1-like homeodomain protein 7 (BLH7) from Arabidopsis thaliana (Mouse-ear cress).